A 75-amino-acid polypeptide reads, in one-letter code: Translational regulator CsrA (75 aa).

This sequence belongs to the CsrA/RsmA family. Homodimer; the beta-strands of each monomer intercalate to form a hydrophobic core, while the alpha-helices form wings that extend away from the core.

Its subcellular location is the cytoplasm. A translational regulator that binds mRNA to regulate translation initiation and/or mRNA stability. Usually binds in the 5'-UTR at or near the Shine-Dalgarno sequence preventing ribosome-binding, thus repressing translation. Its main target seems to be the major flagellin gene, while its function is anatagonized by FliW. The polypeptide is Translational regulator CsrA (Thermosipho melanesiensis (strain DSM 12029 / CIP 104789 / BI429)).